We begin with the raw amino-acid sequence, 613 residues long: MMDYKKLGLKVGIEIHQQLDTKHKLFCLCPTLTREVEESNFEFFRYLRLKRSEIGEEDRAAKEEVERSRRFIYKYYDTTCLVEADEEPPREVNREALLIAIQVAKMLNMEVVDEVHVMRKIVIDGSNTTGFQRTALVAFGGFLEVDGKRVGVATLCLEEEACRKVEDGEGYAVYSLDRLGIPLVEIGTEPDIDSPEMAKKVAARLGMILRSTGKVKRGLGTIRQDVNISIRDGARVEIKGVQELDILDKIVEYEVLRQVNLLKIREELKQRGARVEEKVFDVTDVFSNTKSKIIRNKTVKAILLRGFGGIVGREIQPGRRLGTEFADIAKTYGLGGVFHTDELPAYGISEEEVSRLRDAVGAEDGDAVVMAAGDAVRVERALRRIIERAKHCLVGVPEETRKANEDGTTSYLRPLPGAARMYPETDVPPVVVTEEMLNVEIPELIEERARRYEKLLPKDLAWEIADSPYYRVFEEYSEKLQPTVVARVLYLAPAALRREGVEIERLEERHYRLVLDMVLRGDIAKEGAEEALKLLCQNPEMSAGQLKEKIGAAEDIDGFIAKLIEEKADLIAERGEGAFKPLMGLVMKEFRGKVDGKVVAEKLKKALKSALSQ.

It belongs to the GatB/GatE family. GatE subfamily. In terms of assembly, heterodimer of GatD and GatE.

It catalyses the reaction L-glutamyl-tRNA(Gln) + L-glutamine + ATP + H2O = L-glutaminyl-tRNA(Gln) + L-glutamate + ADP + phosphate + H(+). Allows the formation of correctly charged Gln-tRNA(Gln) through the transamidation of misacylated Glu-tRNA(Gln) in organisms which lack glutaminyl-tRNA synthetase. The reaction takes place in the presence of glutamine and ATP through an activated gamma-phospho-Glu-tRNA(Gln). The GatDE system is specific for glutamate and does not act on aspartate. The sequence is that of Glutamyl-tRNA(Gln) amidotransferase subunit E from Archaeoglobus fulgidus (strain ATCC 49558 / DSM 4304 / JCM 9628 / NBRC 100126 / VC-16).